A 338-amino-acid polypeptide reads, in one-letter code: Nucleoid-associated protein PM1885 (338 aa).

It belongs to the YejK family.

It is found in the cytoplasm. Its subcellular location is the nucleoid. The polypeptide is Nucleoid-associated protein PM1885 (Pasteurella multocida (strain Pm70)).